The following is a 480-amino-acid chain: UDP-N-acetylmuramate--L-alanine ligase (480 aa).

125–131 (GTHGKTT) contributes to the ATP binding site.

The protein belongs to the MurCDEF family.

The protein localises to the cytoplasm. It carries out the reaction UDP-N-acetyl-alpha-D-muramate + L-alanine + ATP = UDP-N-acetyl-alpha-D-muramoyl-L-alanine + ADP + phosphate + H(+). Its pathway is cell wall biogenesis; peptidoglycan biosynthesis. Functionally, cell wall formation. The polypeptide is UDP-N-acetylmuramate--L-alanine ligase (Ectopseudomonas mendocina (strain ymp) (Pseudomonas mendocina)).